The sequence spans 343 residues: Calcium/calmodulin-dependent protein kinase type 1B (343 aa).

The region spanning 15–270 is the Protein kinase domain; it reads YEIREKLGSG…CQQALQHLWI (256 aa). Residues 21–29 and Lys44 each bind ATP; that span reads LGSGAFSEV. The Proton acceptor role is filled by Asp136. Positions 290–311 are calmodulin-binding; the sequence is KNFARTHWKRAFNATSFLRHIR. A disordered region spans residues 314–343; it reads GQSPEGEEASRQGMTRHSHPGLGTSQSPKW. Residue Ser338 is modified to Phosphoserine.

It belongs to the protein kinase superfamily. CAMK Ser/Thr protein kinase family. CaMK subfamily. Post-translationally, isoform 1 and isoform 2 are phosphorylated by CAMKK1. In terms of tissue distribution, isoform 1 is expressed in liver, heart, lung, kidney, spleen and testis. Isoform 2 is predominantly expressed in cerebrum and cerebellum.

It localises to the cytoplasm. The protein localises to the nucleus. The enzyme catalyses L-seryl-[protein] + ATP = O-phospho-L-seryl-[protein] + ADP + H(+). It carries out the reaction L-threonyl-[protein] + ATP = O-phospho-L-threonyl-[protein] + ADP + H(+). With respect to regulation, activated by Ca(2+)/calmodulin. Must be phosphorylated to be maximally active. Activated by CAMKK1. In terms of biological role, calcium/calmodulin-dependent protein kinase belonging to a proposed calcium-triggered signaling cascade. In vitro, isoform 1 and isoform 2 phosphorylate CREB1, SYN1/synapsin I. Phosphorylates and activates CAMK1. This is Calcium/calmodulin-dependent protein kinase type 1B (Pnck) from Rattus norvegicus (Rat).